Here is a 362-residue protein sequence, read N- to C-terminus: Phosphoserine aminotransferase (362 aa).

L-glutamate is bound by residues Ser-9 and Arg-42. Pyridoxal 5'-phosphate-binding positions include 76 to 77, Trp-102, Thr-153, Asp-174, and Gln-197; that span reads GR. Lys-198 carries the post-translational modification N6-(pyridoxal phosphate)lysine. 239–240 serves as a coordination point for pyridoxal 5'-phosphate; that stretch reads NT.

This sequence belongs to the class-V pyridoxal-phosphate-dependent aminotransferase family. SerC subfamily. As to quaternary structure, homodimer. It depends on pyridoxal 5'-phosphate as a cofactor.

The protein localises to the cytoplasm. The enzyme catalyses O-phospho-L-serine + 2-oxoglutarate = 3-phosphooxypyruvate + L-glutamate. The catalysed reaction is 4-(phosphooxy)-L-threonine + 2-oxoglutarate = (R)-3-hydroxy-2-oxo-4-phosphooxybutanoate + L-glutamate. The protein operates within amino-acid biosynthesis; L-serine biosynthesis; L-serine from 3-phospho-D-glycerate: step 2/3. It functions in the pathway cofactor biosynthesis; pyridoxine 5'-phosphate biosynthesis; pyridoxine 5'-phosphate from D-erythrose 4-phosphate: step 3/5. Functionally, catalyzes the reversible conversion of 3-phosphohydroxypyruvate to phosphoserine and of 3-hydroxy-2-oxo-4-phosphonooxybutanoate to phosphohydroxythreonine. The polypeptide is Phosphoserine aminotransferase (Shigella dysenteriae serotype 1 (strain Sd197)).